The chain runs to 171 residues: Translationally-controlled tumor protein homolog (171 aa).

In terms of domain architecture, TCTP spans 1–171 (MKIWKDVFTG…FKHGLEEEKF (171 aa)).

This sequence belongs to the TCTP family.

It is found in the cytoplasm. Involved in calcium binding and microtubule stabilization. The sequence is that of Translationally-controlled tumor protein homolog from Anopheles gambiae (African malaria mosquito).